The following is an 86-amino-acid chain: Venom metalloproteinase (86 aa).

Asp7 is a Ca(2+) binding site. Zn(2+) is bound at residue His67. Residue Glu68 is part of the active site. Zn(2+) contacts are provided by His71 and His77.

Belongs to the venom metalloproteinase (M12B) family. Zn(2+) serves as cofactor. As to expression, expressed by the venom gland.

It localises to the secreted. This is Venom metalloproteinase from Tityus serrulatus (Brazilian scorpion).